The following is a 586-amino-acid chain: uncharacterized protein (586 aa).

The interval 1-115 is disordered; the sequence is MRVLVAETGR…NTEKLAGRDD (115 aa). Residues 8-20 are compositionally biased toward basic and acidic residues; the sequence is TGREDNVSVHSRE. A compositionally biased stretch (polar residues) spans 21 to 31; the sequence is VSVNGSDSGTG. A compositionally biased stretch (basic and acidic residues) spans 35-44; the sequence is YKLETDDEHP. The segment covering 76–107 has biased composition (polar residues); it reads TGMNTEYNDDNSSLVNTPRDSTTYAETNSPNT. 6 WD repeats span residues 184 to 223, 253 to 291, 293 to 333, 335 to 374, 387 to 430, and 432 to 474; these read QFKESVWASEISKSGKYLATAGKDAIIRVWKVIETPERRE, GHNAEVLSISWSKNDFLLTSSADRTVRLWHPKSTKSLAV, RHNE…ILHW, ELEYVVSTICFYPDGESIVVGMFYGLCAIYETKNLQYVSS, CRVT…LVLK, and SDAH…LINA.

The protein resides in the cytoplasm. It is found in the nucleus. This is an uncharacterized protein from Schizosaccharomyces pombe (strain 972 / ATCC 24843) (Fission yeast).